The sequence spans 261 residues: Cytochrome c oxidase subunit 3 (261 aa).

At 1–15 (MTHQTHAYHMVNPSP) the chain is on the mitochondrial matrix side. The helical transmembrane segment at 16–34 (WPLTGALSALLMTSGLIMW) threads the bilayer. Topologically, residues 35 to 40 (FHFNSV) are mitochondrial intermembrane. A helical membrane pass occupies residues 41-66 (ALLTLGLTTNMLTMYQWWRDVIREST). Over 67 to 72 (FQGHHT) the chain is Mitochondrial matrix. Residues 73-105 (PNVQKGLRYGMILFIISEVLFFTGFFWAFYHSS) form a helical membrane-spanning segment. Over 106 to 128 (LAPTPELGGCWPPTGIHPLNPLE) the chain is Mitochondrial intermembrane. Residues 129 to 152 (VPLLNTSVLLASGVSITWAHHSLM) form a helical membrane-spanning segment. Residues 153–155 (EGN) lie on the Mitochondrial matrix side of the membrane. Residues 156–183 (RNHMLQALFITIALGVYFTLLQASEYYE) traverse the membrane as a helical segment. Topologically, residues 184–190 (APFTISD) are mitochondrial intermembrane. Residues 191–223 (GVYGSTFFVATGFHGLHVIIGSTFLIVCFFRQL) traverse the membrane as a helical segment. The Mitochondrial matrix portion of the chain corresponds to 224–232 (KFHFTSSHH). Residues 233–256 (FGFEAAAWYWHFVDVVWLFLYVSI) form a helical membrane-spanning segment. Residues 257-261 (YWWGS) lie on the Mitochondrial intermembrane side of the membrane.

Belongs to the cytochrome c oxidase subunit 3 family. Component of the cytochrome c oxidase (complex IV, CIV), a multisubunit enzyme composed of 14 subunits. The complex is composed of a catalytic core of 3 subunits MT-CO1, MT-CO2 and MT-CO3, encoded in the mitochondrial DNA, and 11 supernumerary subunits COX4I, COX5A, COX5B, COX6A, COX6B, COX6C, COX7A, COX7B, COX7C, COX8 and NDUFA4, which are encoded in the nuclear genome. The complex exists as a monomer or a dimer and forms supercomplexes (SCs) in the inner mitochondrial membrane with NADH-ubiquinone oxidoreductase (complex I, CI) and ubiquinol-cytochrome c oxidoreductase (cytochrome b-c1 complex, complex III, CIII), resulting in different assemblies (supercomplex SCI(1)III(2)IV(1) and megacomplex MCI(2)III(2)IV(2)).

The protein localises to the mitochondrion inner membrane. The catalysed reaction is 4 Fe(II)-[cytochrome c] + O2 + 8 H(+)(in) = 4 Fe(III)-[cytochrome c] + 2 H2O + 4 H(+)(out). Its function is as follows. Component of the cytochrome c oxidase, the last enzyme in the mitochondrial electron transport chain which drives oxidative phosphorylation. The respiratory chain contains 3 multisubunit complexes succinate dehydrogenase (complex II, CII), ubiquinol-cytochrome c oxidoreductase (cytochrome b-c1 complex, complex III, CIII) and cytochrome c oxidase (complex IV, CIV), that cooperate to transfer electrons derived from NADH and succinate to molecular oxygen, creating an electrochemical gradient over the inner membrane that drives transmembrane transport and the ATP synthase. Cytochrome c oxidase is the component of the respiratory chain that catalyzes the reduction of oxygen to water. Electrons originating from reduced cytochrome c in the intermembrane space (IMS) are transferred via the dinuclear copper A center (CU(A)) of subunit 2 and heme A of subunit 1 to the active site in subunit 1, a binuclear center (BNC) formed by heme A3 and copper B (CU(B)). The BNC reduces molecular oxygen to 2 water molecules using 4 electrons from cytochrome c in the IMS and 4 protons from the mitochondrial matrix. This Nanger dama (Dama gazelle) protein is Cytochrome c oxidase subunit 3 (MT-CO3).